Reading from the N-terminus, the 364-residue chain is Ribosomal RNA large subunit methyltransferase F (364 aa).

The segment covering 1–17 has biased composition (low complexity); the sequence is MPKPAIKTAAKPATSSA. The tract at residues 1–53 is disordered; that stretch reads MPKPAIKTAAKPATSSAGKRGKPITPKSVAKPQAAKPKTVSKPKVKPGEKKRL. The segment covering 39–53 has biased composition (basic residues); it reads TVSKPKVKPGEKKRL.

This sequence belongs to the methyltransferase superfamily. METTL16/RlmF family.

It is found in the cytoplasm. The catalysed reaction is adenosine(1618) in 23S rRNA + S-adenosyl-L-methionine = N(6)-methyladenosine(1618) in 23S rRNA + S-adenosyl-L-homocysteine + H(+). Its function is as follows. Specifically methylates the adenine in position 1618 of 23S rRNA. This chain is Ribosomal RNA large subunit methyltransferase F, found in Shewanella sp. (strain MR-4).